We begin with the raw amino-acid sequence, 467 residues long: Glutamate--tRNA ligase (467 aa).

The 'HIGH' region motif lies at 9-19; the sequence is PSPTGYLHIGG. A 'KMSKS' region motif is present at residues 237–241; the sequence is KLSKR. Lysine 240 serves as a coordination point for ATP.

The protein belongs to the class-I aminoacyl-tRNA synthetase family. Glutamate--tRNA ligase type 1 subfamily. As to quaternary structure, monomer.

The protein resides in the cytoplasm. It carries out the reaction tRNA(Glu) + L-glutamate + ATP = L-glutamyl-tRNA(Glu) + AMP + diphosphate. Its function is as follows. Catalyzes the attachment of glutamate to tRNA(Glu) in a two-step reaction: glutamate is first activated by ATP to form Glu-AMP and then transferred to the acceptor end of tRNA(Glu). The chain is Glutamate--tRNA ligase from Xanthomonas axonopodis pv. citri (strain 306).